The following is a 467-amino-acid chain: Probable protein phosphatase 2C 6 (467 aa).

Residues 61 to 81 (VEDDAVAPGRGEEGGEASAVG) are disordered. The 309-residue stretch at 149 to 457 (LWGHKSICGR…DNISVIVVDL (309 aa)) folds into the PPM-type phosphatase domain. The Mn(2+) site is built by aspartate 205, glycine 206, aspartate 386, and aspartate 448.

This sequence belongs to the PP2C family. As to quaternary structure, interacts with PYL9. Mg(2+) is required as a cofactor. The cofactor is Mn(2+).

Its subcellular location is the nucleus. The protein resides in the cytoplasm. The protein localises to the cytosol. The enzyme catalyses O-phospho-L-seryl-[protein] + H2O = L-seryl-[protein] + phosphate. It carries out the reaction O-phospho-L-threonyl-[protein] + H2O = L-threonyl-[protein] + phosphate. Its function is as follows. Probable protein phosphatase that may function in abscisic acid (ABA) signaling. The polypeptide is Probable protein phosphatase 2C 6 (Oryza sativa subsp. japonica (Rice)).